The chain runs to 100 residues: MGALTKAEMAERLYEELGLNKREAKELVELFFEEIRHALEENEQVKLSGFGNFDLRDKRQRPGRNPKTGEEIPITARRVVTFRPGQKLKARVEAYAGTKP.

The disordered stretch occupies residues 53-72 (FDLRDKRQRPGRNPKTGEEI).

It belongs to the bacterial histone-like protein family. In terms of assembly, heterodimer of an alpha and a beta chain.

Functionally, this protein is one of the two subunits of integration host factor, a specific DNA-binding protein that functions in genetic recombination as well as in transcriptional and translational control. The polypeptide is Integration host factor subunit alpha (Pseudomonas putida (strain ATCC 700007 / DSM 6899 / JCM 31910 / BCRC 17059 / LMG 24140 / F1)).